A 421-amino-acid chain; its full sequence is UDP-N-acetylglucosamine 1-carboxyvinyltransferase (421 aa).

Position 23 to 24 (23 to 24 (KN)) interacts with phosphoenolpyruvate. Arginine 92 lines the UDP-N-acetyl-alpha-D-glucosamine pocket. The active-site Proton donor is the cysteine 116. Cysteine 116 carries the 2-(S-cysteinyl)pyruvic acid O-phosphothioketal modification. Residues 121–125 (RPVDL), 161–164 (KVSV), aspartate 306, and isoleucine 328 contribute to the UDP-N-acetyl-alpha-D-glucosamine site.

It belongs to the EPSP synthase family. MurA subfamily.

It is found in the cytoplasm. It carries out the reaction phosphoenolpyruvate + UDP-N-acetyl-alpha-D-glucosamine = UDP-N-acetyl-3-O-(1-carboxyvinyl)-alpha-D-glucosamine + phosphate. It functions in the pathway cell wall biogenesis; peptidoglycan biosynthesis. Functionally, cell wall formation. Adds enolpyruvyl to UDP-N-acetylglucosamine. This is UDP-N-acetylglucosamine 1-carboxyvinyltransferase from Vibrio campbellii (strain ATCC BAA-1116).